We begin with the raw amino-acid sequence, 426 residues long: Glutamate-1-semialdehyde 2,1-aminomutase (426 aa).

At Lys265 the chain carries N6-(pyridoxal phosphate)lysine.

It belongs to the class-III pyridoxal-phosphate-dependent aminotransferase family. HemL subfamily. In terms of assembly, homodimer. Pyridoxal 5'-phosphate serves as cofactor.

It is found in the cytoplasm. It carries out the reaction (S)-4-amino-5-oxopentanoate = 5-aminolevulinate. Its pathway is porphyrin-containing compound metabolism; protoporphyrin-IX biosynthesis; 5-aminolevulinate from L-glutamyl-tRNA(Glu): step 2/2. This Actinobacillus pleuropneumoniae serotype 5b (strain L20) protein is Glutamate-1-semialdehyde 2,1-aminomutase.